The primary structure comprises 169 residues: Endoribonuclease YbeY (169 aa).

Residues His135, His139, and His145 each coordinate Zn(2+).

Belongs to the endoribonuclease YbeY family. Requires Zn(2+) as cofactor.

The protein localises to the cytoplasm. Functionally, single strand-specific metallo-endoribonuclease involved in late-stage 70S ribosome quality control and in maturation of the 3' terminus of the 16S rRNA. In Lachnospira eligens (strain ATCC 27750 / DSM 3376 / VPI C15-48 / C15-B4) (Eubacterium eligens), this protein is Endoribonuclease YbeY.